Reading from the N-terminus, the 554-residue chain is Potassium-transporting ATPase potassium-binding subunit (554 aa).

10 helical membrane passes run 1 to 21 (MSPV…LALA), 60 to 80 (PAYL…LYVL), 131 to 151 (GLAV…VALV), 174 to 194 (VRVL…CGAI), 246 to 266 (PGPF…FALT), 279 to 299 (GYAI…LMMW), 375 to 395 (GLYG…LMVG), 412 to 432 (FAAC…AAAM), 481 to 501 (IGIV…ALAG), and 525 to 545 (GLLV…ALAL).

Belongs to the KdpA family. The system is composed of three essential subunits: KdpA, KdpB and KdpC.

It is found in the cell membrane. Part of the high-affinity ATP-driven potassium transport (or Kdp) system, which catalyzes the hydrolysis of ATP coupled with the electrogenic transport of potassium into the cytoplasm. This subunit binds the extracellular potassium ions and delivers the ions to the membrane domain of KdpB through an intramembrane tunnel. The chain is Potassium-transporting ATPase potassium-binding subunit from Streptomyces avermitilis (strain ATCC 31267 / DSM 46492 / JCM 5070 / NBRC 14893 / NCIMB 12804 / NRRL 8165 / MA-4680).